A 141-amino-acid polypeptide reads, in one-letter code: Large ribosomal subunit protein uL16 (141 aa).

The segment at 1-23 is disordered; sequence MLMPKRTKWRKQQKGRNRGKSFR.

Belongs to the universal ribosomal protein uL16 family. In terms of assembly, part of the 50S ribosomal subunit.

Functionally, binds 23S rRNA and is also seen to make contacts with the A and possibly P site tRNAs. This Sulfurovum sp. (strain NBC37-1) protein is Large ribosomal subunit protein uL16.